The chain runs to 612 residues: RNA polymerase sigma factor RpoD (612 aa).

Positions 191–206 (QQNNEEDEENNQEDHE) are enriched in acidic residues. Positions 191 to 210 (QQNNEEDEENNQEDHEDDHS) are disordered. The tract at residues 378–448 (MVEANLRLVI…TRSIADQART (71 aa)) is sigma-70 factor domain-2. Positions 402 to 405 (DLIQ) match the Interaction with polymerase core subunit RpoC motif. Residues 457–533 (ETINKLNRIS…DTTLELPLDS (77 aa)) are sigma-70 factor domain-3. The interval 546–599 (VLSGLTAREAKVLRMRFGIDMNTDHTLEEVGKQFDVTRERIRQIEAKALRKLRH) is sigma-70 factor domain-4. Positions 572–591 (LEEVGKQFDVTRERIRQIEA) form a DNA-binding region, H-T-H motif.

This sequence belongs to the sigma-70 factor family. RpoD/SigA subfamily. As to quaternary structure, interacts transiently with the RNA polymerase catalytic core.

It localises to the cytoplasm. Its function is as follows. Sigma factors are initiation factors that promote the attachment of RNA polymerase to specific initiation sites and are then released. This sigma factor is the primary sigma factor during exponential growth. In Buchnera aphidicola subsp. Acyrthosiphon pisum (strain APS) (Acyrthosiphon pisum symbiotic bacterium), this protein is RNA polymerase sigma factor RpoD.